Here is a 223-residue protein sequence, read N- to C-terminus: Protein-lysine N-methyltransferase CG9154 (223 aa).

It belongs to the class I-like SAM-binding methyltransferase superfamily. EFM5 family.

It is found in the cytoplasm. Its function is as follows. S-adenosyl-L-methionine-dependent protein-lysine N-methyltransferase that methylates elongation factor 1-alpha. The polypeptide is Protein-lysine N-methyltransferase CG9154 (Drosophila melanogaster (Fruit fly)).